The sequence spans 484 residues: DRNPLEECFRETDYEEFLEIARNGLKKTSNPKHVVVVGAGMSGLSAAYVLAGAGHKVTVLEASERAGGRVRTHRNSKEGWYANLGPMRIPEKHRIVREYIRKFGLNLNEFSQENDNAWYFIKNIRKRVGEVNKDPGLLKYPVKPSEEGKSAGQLYEESLGSAVKDLKRTNCSYILNKYDTYSTKEYLIKEGNLSPGAVDMIGDLLNEDSGYYVSFIESLKHDDIFAYEKRFDEIVGGMDQLPTSMYRAIEEKVKFNARVIKIQQNANQVTVTYQTPEKDTSSNTADYVIVCTTSRAARRIQFEPPLPPKKQHALRSVHYRSGTKIFLTCSSKFWEDDGIHGGKSTTDLPSRFIYYPNHNFSTGVGVIIAYGIGDDANFFQALKFKDCADIVFNDLSLIHQLPKEEIQSFCYPSMIQKWSLDKYAMGAITTFTPYQFQRFSEALTAPQGRIFFAGEYTAEAHGWIDSTIKSGLTAARDVNRASEQ.

A disulfide bridge connects residues cysteine 8 and cysteine 171. FAD contacts are provided by residues 41-42, 61-62, and arginine 69; these read MS and EA. Histidine 73 serves as a coordination point for Zn(2+). 85-88 contacts FAD; sequence GPMR. Arginine 88 serves as a coordination point for substrate. N-linked (GlcNAc...) asparagine glycosylation occurs at asparagine 170. Histidine 221 lines the substrate pocket. An FAD-binding site is contributed by valine 259. Glutamate 277 contributes to the Zn(2+) binding site. A disulfide bridge connects residues cysteine 329 and cysteine 410. Residue tyrosine 370 coordinates substrate. Residues glutamate 455 and 462 to 467 contribute to the FAD site; that span reads GWIDST. 462 to 463 serves as a coordination point for substrate; it reads GW.

This sequence belongs to the flavin monoamine oxidase family. FIG1 subfamily. As to quaternary structure, homodimer; non-covalently linked. The cofactor is FAD. As to expression, expressed by the venom gland.

It is found in the secreted. It catalyses the reaction an L-alpha-amino acid + O2 + H2O = a 2-oxocarboxylate + H2O2 + NH4(+). In terms of biological role, catalyzes an oxidative deamination of predominantly hydrophobic and aromatic L-amino acids, thus producing hydrogen peroxide that may contribute to the diverse toxic effects of this enzyme. Exhibits diverse biological activities, such as hemorrhage, hemolysis, edema, apoptosis of vascular endothelial cells or tumor cell lines, antibacterial and antiparasitic activities, as well as regulation of platelet aggregation. Effects of snake L-amino oxidases on platelets are controversial, since they either induce aggregation or inhibit agonist-induced aggregation. These different effects are probably due to different experimental conditions. The protein is L-amino-acid oxidase of Vipera ammodytes ammodytes (Western sand viper).